A 117-amino-acid polypeptide reads, in one-letter code: Large ribosomal subunit protein bL20c (117 aa).

This sequence belongs to the bacterial ribosomal protein bL20 family.

The protein localises to the plastid. It is found in the chloroplast. Binds directly to 23S ribosomal RNA and is necessary for the in vitro assembly process of the 50S ribosomal subunit. It is not involved in the protein synthesizing functions of that subunit. The chain is Large ribosomal subunit protein bL20c from Lobularia maritima (Sweet alyssum).